The sequence spans 516 residues: Gamma-aminobutyrate transaminase 1, mitochondrial (516 aa).

The N-terminal 47 residues, 1 to 47, are a transit peptide targeting the mitochondrion; it reads MVIARGLLRSNASSSSSQAINLLKYVTSTGSLQGHTQNLCDASTRHF. 171–172 is a binding site for pyridoxal 5'-phosphate; that stretch reads GS. Substrate is bound at residue Tyr204. Residue Asp311 coordinates pyridoxal 5'-phosphate. Lys340 contributes to the substrate binding site. At Lys340 the chain carries N6-(pyridoxal phosphate)lysine.

It belongs to the class-III pyridoxal-phosphate-dependent aminotransferase family. As to expression, expressed in roots, stems and panicles.

The protein localises to the mitochondrion. It catalyses the reaction 4-aminobutanoate + pyruvate = succinate semialdehyde + L-alanine. The catalysed reaction is 4-aminobutanoate + glyoxylate = succinate semialdehyde + glycine. Its function is as follows. Transaminase that degrades gamma-amino butyric acid (GABA) and uses pyruvate as amino-group acceptor, but not 2-oxoglutarate. Not involved in the interaction with blast fungus. The polypeptide is Gamma-aminobutyrate transaminase 1, mitochondrial (OSL2) (Oryza sativa subsp. japonica (Rice)).